A 280-amino-acid polypeptide reads, in one-letter code: Tobamovirus multiplication protein 2A (280 aa).

At 1-13 (MACRGCLECLLKL) the chain is on the cytoplasmic side. Residues 14 to 34 (LNFLLAVAGLGMIGYGIYLFV) traverse the membrane as a helical segment. The Extracellular segment spans residues 35–78 (EYKRVTDNSVTFDLTNGDQSYVSFGRPILMAVSLSSNIFDNLPK). Residues 79–99 (AWFIYLFIGIGVALFVISCCG) traverse the membrane as a helical segment. Over 100-113 (CVGTCSRSVCCLSC) the chain is Cytoplasmic. Residues 114–134 (YSLLLILLILVELGFAAFIFF) form a helical membrane-spanning segment. The Extracellular portion of the chain corresponds to 135–162 (DNSWRDELPSDRTGNFDTIYNFLRENWK). A helical membrane pass occupies residues 163 to 183 (IVRWVALGAVVFEALLFLLAL). Over 184–280 (MVRAANTPAE…NEEKGRCTIM (97 aa)) the chain is Cytoplasmic. A phosphoserine mark is found at Ser-196 and Ser-233. Residues 258-280 (SESHRFQQMPAQPNEEKGRCTIM) are disordered. The span at 271-280 (NEEKGRCTIM) shows a compositional bias: basic and acidic residues.

This sequence belongs to the tetraspanin (TM4SF) family. As to quaternary structure, homodimer. Constituent of tobamovirus replication complex. Interacts with TOM1. In terms of tissue distribution, expressed in rosette leaves.

The protein localises to the vacuole membrane. Its function is as follows. Necessary for the efficient intracellular multiplication of tobamoviruses, being a component of the replication complex. The protein is Tobamovirus multiplication protein 2A (TOM2A) of Arabidopsis thaliana (Mouse-ear cress).